A 93-amino-acid polypeptide reads, in one-letter code: Cobalt transport protein CbiN (93 aa).

Transmembrane regions (helical) follow at residues 5–25 (LMLLAMVVALVILPFFINHGG) and 63–83 (LLFTLQGSLGAAVIFYILGYC).

This sequence belongs to the CbiN family. Forms an energy-coupling factor (ECF) transporter complex composed of an ATP-binding protein (A component, CbiO), a transmembrane protein (T component, CbiQ) and 2 possible substrate-capture proteins (S components, CbiM and CbiN) of unknown stoichimetry.

The protein resides in the cell inner membrane. Its pathway is cofactor biosynthesis; adenosylcobalamin biosynthesis. Part of the energy-coupling factor (ECF) transporter complex CbiMNOQ involved in cobalt import. In Salmonella agona (strain SL483), this protein is Cobalt transport protein CbiN.